The sequence spans 214 residues: Probable transaldolase (214 aa).

K83 functions as the Schiff-base intermediate with substrate in the catalytic mechanism.

Belongs to the transaldolase family. Type 3B subfamily.

It is found in the cytoplasm. It catalyses the reaction D-sedoheptulose 7-phosphate + D-glyceraldehyde 3-phosphate = D-erythrose 4-phosphate + beta-D-fructose 6-phosphate. It participates in carbohydrate degradation; pentose phosphate pathway; D-glyceraldehyde 3-phosphate and beta-D-fructose 6-phosphate from D-ribose 5-phosphate and D-xylulose 5-phosphate (non-oxidative stage): step 2/3. In terms of biological role, transaldolase is important for the balance of metabolites in the pentose-phosphate pathway. This Leptospira borgpetersenii serovar Hardjo-bovis (strain JB197) protein is Probable transaldolase.